We begin with the raw amino-acid sequence, 444 residues long: Nuclear envelope integral membrane protein 1 (444 aa).

Residues 1–43 form the signal peptide; that stretch reads MAGGMKVAVSPAVGPGPWGSGVGGGGTVRLLLILSGCLVYGTA. N-linked (GlcNAc...) asparagine glycosylation is present at Asn-125. Helical transmembrane passes span 161-181, 186-206, 216-236, 245-265, and 289-309; these read PKLF…DLLS, FYYS…IIFI, PIYV…QLVF, CYWQ…FAVC, and LCFM…IIIA. Residues 186 to 297 are a; required for its colocalization with lamins at the nuclear envelope; that stretch reads FYYSTGMTVG…GLCFMYSGIQ (112 aa). The segment at 336–405 is b; required for interaction with RAN-GTP; that stretch reads PVPPRLLTEE…LTPNEVSVHE (70 aa). The interval 336 to 444 is required for nuclear localization; the sequence is PVPPRLLTEE…PAITQNNFLT (109 aa). Residues Ser-368, Ser-424, and Ser-425 each carry the phosphoserine modification.

Belongs to the NEMP family. As to quaternary structure, homooligomer. Interacts with RAN-GTP. Interacts with EMD. Phosphorylation may regulate its interaction with RAN-GTP.

The protein localises to the nucleus inner membrane. It localises to the nucleus envelope. Its function is as follows. Together with EMD, contributes to nuclear envelope stiffness in germ cells. Required for female fertility. Essential for normal erythropoiesis. Required for efficient nuclear envelope opening and enucleation during the late stages of erythroblast maturation. The protein is Nuclear envelope integral membrane protein 1 (NEMP1) of Homo sapiens (Human).